The following is a 242-amino-acid chain: 1-(5-phosphoribosyl)-5-[(5-phosphoribosylamino)methylideneamino] imidazole-4-carboxamide isomerase (242 aa).

Asp10 serves as the catalytic Proton acceptor. The Proton donor role is filled by Asp131.

The protein belongs to the HisA/HisF family.

The protein resides in the cytoplasm. It carries out the reaction 1-(5-phospho-beta-D-ribosyl)-5-[(5-phospho-beta-D-ribosylamino)methylideneamino]imidazole-4-carboxamide = 5-[(5-phospho-1-deoxy-D-ribulos-1-ylimino)methylamino]-1-(5-phospho-beta-D-ribosyl)imidazole-4-carboxamide. Its pathway is amino-acid biosynthesis; L-histidine biosynthesis; L-histidine from 5-phospho-alpha-D-ribose 1-diphosphate: step 4/9. The polypeptide is 1-(5-phosphoribosyl)-5-[(5-phosphoribosylamino)methylideneamino] imidazole-4-carboxamide isomerase (Granulibacter bethesdensis (strain ATCC BAA-1260 / CGDNIH1)).